The sequence spans 162 residues: Interleukin-15 (162 aa).

An N-terminal signal peptide occupies residues 1–29; that stretch reads MRISKPHLRITSIQCYVCLLLNTHFLTEA. Positions 30 to 48 are excised as a propeptide; that stretch reads GIRVFILGCISAGIPKTEA. Disulfide bonds link cysteine 83–cysteine 133 and cysteine 90–cysteine 136. N-linked (GlcNAc...) asparagine glycans are attached at residues asparagine 119, asparagine 127, and asparagine 143.

This sequence belongs to the IL-15/IL-21 family.

Its subcellular location is the secreted. Its function is as follows. Cytokine that plays a major role in the development of inflammatory and protective immune responses to microbial invaders and parasites by modulating immune cells of both the innate and adaptive immune systems. Stimulates the proliferation of natural killer cells, T-cells and B-cells and promotes the secretion of several cytokines. In monocytes, induces the production of IL8 and monocyte chemotactic protein 1/CCL2, two chemokines that attract neutrophils and monocytes respectively to sites of infection. Unlike most cytokines, which are secreted in soluble form, IL15 is expressed in association with its high affinity IL15RA on the surface of IL15-producing cells and delivers signals to target cells that express IL2RB and IL2RG receptor subunits. Binding to its receptor triggers the phosphorylation of JAK1 and JAK3 and the recruitment and subsequent phosphorylation of signal transducer and activator of transcription-3/STAT3 and STAT5. In mast cells, induces the rapid tyrosine phosphorylation of STAT6 and thereby controls mast cell survival and release of cytokines such as IL4. The protein is Interleukin-15 (IL15) of Marmota himalayana (Himalayan marmot).